Consider the following 450-residue polypeptide: MKKIANFANKKVLVLGLAKSGESAARLLDKLGAIVTVNDGKPFEENPAAQSLLEEGIKVVTGGHPLELLDEDFELMVKNPGIPYDNAMVVRALEKKIPVITEVELAYLISEAPIIGITGSNGKTTTTTMIAQVLTAGGQNGLLSGNIGFPASQVAQTASSKDMLVMELSSFQLMGIEDFHPQIAVITNLMPTHLDYHGSVEEYAAAKWNIQKNMTADDYLVLNFNQDWAKEMASQTQATVVPFSTTEKVDGAYLEGDVLTFRGEAIMQVAEIGVPGSHNVENALATIAVAKLRGIDNQTIKEVLSAFGGVKHRLQYVGQVNEVAFYNDSKSTNILATQKALSGFDNSKVILIAGGLDRGNEFDELVPDLKGLKKMVILGQSAARVKRAADQAGVSYLDATDVRDAAHKAFAQAEPGDIVLLSPANASWDMYSNFEVRGDEFLAAFEELKG.

Residue 119-125 (GSNGKTT) participates in ATP binding.

It belongs to the MurCDEF family.

It localises to the cytoplasm. It carries out the reaction UDP-N-acetyl-alpha-D-muramoyl-L-alanine + D-glutamate + ATP = UDP-N-acetyl-alpha-D-muramoyl-L-alanyl-D-glutamate + ADP + phosphate + H(+). It participates in cell wall biogenesis; peptidoglycan biosynthesis. Functionally, cell wall formation. Catalyzes the addition of glutamate to the nucleotide precursor UDP-N-acetylmuramoyl-L-alanine (UMA). This is UDP-N-acetylmuramoylalanine--D-glutamate ligase from Streptococcus sanguinis (strain SK36).